The chain runs to 208 residues: MSKVLFVKANDRPAEQAVSSKMYETFVSTYKEANPNTEITELDLFALDLPYYGNIAISGGYKRSQGMELTAEEEKAVATVDQYLNQFLEADKVVFAFPLWNFTVPAPLITYISYLSQAGKTFKYTANGPEGLVGGKKVVVLGARGSDYSSEQMAPMEMAVNYVTTVLGFWGITNPETVVIEGHNQYPDRSQQIVEEGLENVKKVAAKF.

It belongs to the azoreductase type 1 family. Homodimer. Requires FMN as cofactor.

The enzyme catalyses 2 a quinone + NADH + H(+) = 2 a 1,4-benzosemiquinone + NAD(+). It carries out the reaction N,N-dimethyl-1,4-phenylenediamine + anthranilate + 2 NAD(+) = 2-(4-dimethylaminophenyl)diazenylbenzoate + 2 NADH + 2 H(+). Functionally, quinone reductase that provides resistance to thiol-specific stress caused by electrophilic quinones. In terms of biological role, also exhibits azoreductase activity. Catalyzes the reductive cleavage of the azo bond in aromatic azo compounds to the corresponding amines. The polypeptide is FMN-dependent NADH:quinone oxidoreductase 1 (Bacillus cereus (strain ATCC 14579 / DSM 31 / CCUG 7414 / JCM 2152 / NBRC 15305 / NCIMB 9373 / NCTC 2599 / NRRL B-3711)).